A 530-amino-acid chain; its full sequence is Sugar transport protein MST6 (530 aa).

At 1–18 (MAGGVVVNNGGGKDYPGK) the chain is on the cytoplasmic side. Residues 19–39 (LTMFVLFACIVAATGGLIFGY) traverse the membrane as a helical segment. Topologically, residues 40–81 (DIGISGGVTSMNPFLIKFFPSVYRKEQAAEKNQSNQYCKFDS) are extracellular. The chain crosses the membrane as a helical span at residues 82–102 (PLLTMFTSSLYLAALVASFFA). Topologically, residues 103–119 (STVTRVAGRKWSMFGGG) are cytoplasmic. The helical transmembrane segment at 120 to 140 (VTFLVGAALNGAAKNVLMLIL) threads the bilayer. Residues 141 to 142 (GR) are Extracellular-facing. The helical transmembrane segment at 143 to 163 (VLLGVGVGFANQSVPLYLSEM) threads the bilayer. Residues 164 to 169 (APARLR) lie on the Cytoplasmic side of the membrane. A helical membrane pass occupies residues 170–190 (GMLNIGFQLMITIGILCANLI). The Extracellular portion of the chain corresponds to 191-204 (NYGTAKIKGGWGWR). Residues 205–225 (VSLALAAVPAAIIAVGALFLP) traverse the membrane as a helical segment. The Cytoplasmic portion of the chain corresponds to 226 to 291 (DTPNSLIDRG…YRPQLTMAIA (66 aa)). The helical transmembrane segment at 292–312 (IPLFQQLTGINVIMFYAPVLF) threads the bilayer. At 313-323 (KTLGFADDASL) the chain is on the extracellular side. A helical transmembrane segment spans residues 324–344 (MSAVITGLVNVFATFVSIVTV). The Cytoplasmic segment spans residues 345-359 (DRLGRRKLFLQGGTQ). The chain crosses the membrane as a helical span at residues 360–380 (MLACQIVVGSLIGAKFGFSGV). Over 381 to 388 (ADIPKAYA) the chain is Extracellular. Residues 389–409 (AFVVLFICAYVAGFAWSWGPL) form a helical membrane-spanning segment. The Cytoplasmic portion of the chain corresponds to 410–428 (GWLVPSEIFPLEIRSAGQS). A helical membrane pass occupies residues 429–449 (INVSVNMLFTFIIAQAFLPML). Residues 450-453 (CRFK) are Extracellular-facing. A helical membrane pass occupies residues 454–474 (FILFFFFGAWVVIMTLFVAFF). The Cytoplasmic segment spans residues 475 to 530 (LPETKNVPIEEMVLVWKSHWYWGRFIRDEDVHVGADVEMPAAGNRNGKVDPAKLAN).

It belongs to the major facilitator superfamily. Sugar transporter (TC 2.A.1.1) family. In terms of tissue distribution, expressed in leaf blades, leaf sheaths, anthers, ovaries and embryos. Expressed at low levels in roots and shoots.

Its subcellular location is the cell membrane. Functionally, mediates active uptake of hexoses by sugar:proton symport. Can transport glucose, fructose, mannose, galactose, xylose and ribose. This is Sugar transport protein MST6 from Oryza sativa subsp. japonica (Rice).